Reading from the N-terminus, the 749-residue chain is Cytosolic phospholipase A2 (749 aa).

The tract at residues 1–178 (MSFIDPYQHI…MKKLLGPKNS (178 aa)) is phospholipid binding. Phosphoserine is present on serine 2. The C2 domain occupies 6 to 122 (PYQHIIVEHQ…KVGEKKEVPF (117 aa)). Ca(2+) contacts are provided by aspartate 40, threonine 41, aspartate 43, asparagine 65, aspartate 93, alanine 94, and asparagine 95. Residues 140 to 740 (SCPDLRFSMA…SNVEARRFFN (601 aa)) enclose the PLA2c domain. Catalysis depends on serine 228, which acts as the Nucleophile. At threonine 268 the chain carries Phosphothreonine. Residues 409–457 (GSQSRGSTMEEELENITTKHIVSNDSSDSDDESHEPKGTENEDAGSDYQ) are disordered. Phosphoserine is present on residues serine 434, serine 435, and serine 437. Position 505 is a phosphoserine; by MAPK (serine 505). Serine 515 carries the phosphoserine modification. A Glycyl lysine isopeptide (Lys-Gly) (interchain with G-Cter in SUMO2) cross-link involves residue lysine 541. The active-site Proton acceptor is the aspartate 549. Lysine 606 is covalently cross-linked (Glycyl lysine isopeptide (Lys-Gly) (interchain with G-Cter in SUMO2)). A phosphoserine mark is found at serine 727 and serine 729.

As to quaternary structure, interacts with KAT5. Phosphorylated at both Ser-505 and Ser-727 in response to mitogenic stimuli. Expressed in various cells and tissues such as macrophages, neutrophils, fibroblasts and lung endothelium. Expressed in platelets (at protein level).

The protein resides in the cytoplasm. The protein localises to the golgi apparatus membrane. Its subcellular location is the nucleus envelope. It catalyses the reaction a 1,2-diacyl-sn-glycero-3-phosphocholine + H2O = a 1-acyl-sn-glycero-3-phosphocholine + a fatty acid + H(+). The catalysed reaction is a 1-O-alkyl-2-acyl-sn-glycero-3-phosphocholine + H2O = a 1-O-alkyl-sn-glycero-3-phosphocholine + a fatty acid + H(+). It carries out the reaction a 1-acyl-sn-glycero-3-phosphocholine + H2O = sn-glycerol 3-phosphocholine + a fatty acid + H(+). The enzyme catalyses 1-hexadecanoyl-2-(5Z,8Z,11Z,14Z-eicosatetraenoyl)-sn-glycero-3-phosphocholine + H2O = 1-hexadecanoyl-sn-glycero-3-phosphocholine + (5Z,8Z,11Z,14Z)-eicosatetraenoate + H(+). It catalyses the reaction 1,2-di-(5Z,8Z,11Z,14Z-eicosatetraenoyl)-sn-glycero-3-phosphocholine + H2O = 1-(5Z,8Z,11Z,14Z-eicosatetraenoyl)-sn-glycero-3-phosphocholine + (5Z,8Z,11Z,14Z)-eicosatetraenoate + H(+). The catalysed reaction is 1-octadecanoyl-2-(5Z,8Z,11Z,14Z-eicosatetraenoyl)-sn-glycero-3-phosphocholine + H2O = 1-octadecanoyl-sn-glycero-3-phosphocholine + (5Z,8Z,11Z,14Z)-eicosatetraenoate + H(+). It carries out the reaction 1-hexadecanoyl-2-(9Z,12Z-octadecadienoyl)-sn-glycero-3-phosphocholine + H2O = (9Z,12Z)-octadecadienoate + 1-hexadecanoyl-sn-glycero-3-phosphocholine + H(+). The enzyme catalyses 1-octadecanoyl-2-(9Z,12Z,15Z-octadecatrienoyl)-sn-glycero-3-phosphocholine + H2O = (9Z,12Z,15Z)-octadecatrienoate + 1-octadecanoyl-sn-glycero-3-phosphocholine + H(+). It catalyses the reaction 1-(5Z,8Z,11Z,14Z-eicosatetraenoyl)-2-hexadecanoyl-sn-glycero-3-phosphocholine + H2O = 1-(5Z,8Z,11Z,14Z-eicosatetraenoyl)-sn-glycero-3-phosphocholine + hexadecanoate + H(+). The catalysed reaction is 1-O-hexadecyl-2-(5Z,8Z,11Z,14Z)-eicosatetraenoyl-sn-glycero-3-phosphocholine + H2O = 1-O-hexadecyl-sn-glycero-3-phosphocholine + (5Z,8Z,11Z,14Z)-eicosatetraenoate + H(+). It carries out the reaction 1,2-di-(9Z-octadecenoyl)-sn-glycero-3-phospho-(1'-sn-glycerol) + H2O = 1-(9Z-octadecenoyl)-sn-glycero-3-phospho-(1'-sn-glycerol) + (9Z)-octadecenoate + H(+). The enzyme catalyses 1-octadecanoyl-2-(5Z,8Z,11Z,14Z-eicosatetraenoyl)-sn-glycero-3-phosphate + H2O = 1-octadecanoyl-sn-glycero-3-phosphate + (5Z,8Z,11Z,14Z)-eicosatetraenoate + H(+). It catalyses the reaction 1-hexadecanoyl-sn-glycero-3-phosphocholine + H2O = sn-glycerol 3-phosphocholine + hexadecanoate + H(+). The catalysed reaction is 2-(prostaglandin E2)-sn-glycero-3-phosphoethanolamine + H2O = sn-glycero-3-phosphoethanolamine + prostaglandin E2 + H(+). It carries out the reaction 2-[(15S)-hydroxy-(5Z,8Z,11Z,13E)-eicosatetraenoyl]-sn-glycero-3-phosphocholine + H2O = (15S)-hydroxy-(5Z,8Z,11Z,13E)-eicosatetraenoate + sn-glycerol 3-phosphocholine + H(+). The enzyme catalyses 2-[(15R)-hydroxy-(5Z,8Z,11Z,13E)-eicosatetraenoyl]-sn-glycero-3-phosphocholine + H2O = (15R)-hydroxy-(5Z,8Z,11Z,13E)-eicosatetraenoate + sn-glycerol 3-phosphocholine + H(+). It catalyses the reaction 2-(prostaglandin E2)-sn-glycero-3-phosphocholine + H2O = prostaglandin E2 + sn-glycerol 3-phosphocholine + H(+). The catalysed reaction is 2-[(11R)-hydroxy-(5Z,8Z,12E,14Z)-eicosatetraenoyl]-sn-glycero-3-phosphocholine + H2O = (11R)-hydroxy-(5Z,8Z,12E,14Z)-eicosatetraenoate + sn-glycerol 3-phosphocholine + H(+). It carries out the reaction 1-(5Z,8Z,11Z,14Z-eicosatetraenoyl)-2-O-hexadecyl-sn-glycero-3-phosphocholine + H2O = 2-O-hexadecyl-sn-glycero-3-phosphocholine + (5Z,8Z,11Z,14Z)-eicosatetraenoate + H(+). The enzyme catalyses 1-octadecanoyl-2-(5Z,8Z,11Z,14Z-eicosatetraenoyl)-sn-glycero-3-phosphocholine + glycerol = 1-(5Z,8Z,11Z,14Z-eicosatetraenoyl)-glycerol + 1-octadecanoyl-sn-glycero-3-phosphocholine. It catalyses the reaction 1-octadecanoyl-2-(9Z,12Z,15Z-octadecatrienoyl)-sn-glycero-3-phosphocholine + glycerol = 1-(9Z,12Z,15Z-octadecatrienoyl)-glycerol + 1-octadecanoyl-sn-glycero-3-phosphocholine. It participates in membrane lipid metabolism; glycerophospholipid metabolism. The protein operates within lipid metabolism; arachidonate metabolism. It functions in the pathway lipid metabolism; prostaglandin biosynthesis. Its pathway is lipid metabolism; leukotriene B4 biosynthesis. With respect to regulation, activated by cytosolic calcium, which is necessary for binding to membrane lipids. Activated by phosphorylation in response to mitogenic stimuli. Activated by ceramide-1-phosphate. Binding (via C2 domain) to ceramide-1-phosphate increases the affinity for membrane lipids. Can be activated by phosphoinositides in the absence of calcium. Inhibited by ANXA5 in a calcium- and substrate-dependent way. Its function is as follows. Has primarily calcium-dependent phospholipase and lysophospholipase activities, with a major role in membrane lipid remodeling and biosynthesis of lipid mediators of the inflammatory response. Plays an important role in embryo implantation and parturition through its ability to trigger prostanoid production. Preferentially hydrolyzes the ester bond of the fatty acyl group attached at sn-2 position of phospholipids (phospholipase A2 activity). Selectively hydrolyzes sn-2 arachidonoyl group from membrane phospholipids, providing the precursor for eicosanoid biosynthesis via the cyclooxygenase pathway. In an alternative pathway of eicosanoid biosynthesis, hydrolyzes sn-2 fatty acyl chain of eicosanoid lysophopholipids to release free bioactive eicosanoids. Hydrolyzes the ester bond of the fatty acyl group attached at sn-1 position of phospholipids (phospholipase A1 activity) only if an ether linkage rather than an ester linkage is present at the sn-2 position. This hydrolysis is not stereospecific. Has calcium-independent phospholipase A2 and lysophospholipase activities in the presence of phosphoinositides. Has O-acyltransferase activity. Catalyzes the transfer of fatty acyl chains from phospholipids to a primary hydroxyl group of glycerol (sn-1 or sn-3), potentially contributing to monoacylglycerol synthesis. The chain is Cytosolic phospholipase A2 (PLA2G4A) from Homo sapiens (Human).